The chain runs to 561 residues: Oxygen-dependent choline dehydrogenase (561 aa).

An FAD-binding site is contributed by 6–35; it reads DYIIIGAGSAGNVLATRLTEDADVSVLLLE. His475 (proton acceptor) is an active-site residue.

This sequence belongs to the GMC oxidoreductase family. FAD serves as cofactor.

It catalyses the reaction choline + A = betaine aldehyde + AH2. The enzyme catalyses betaine aldehyde + NAD(+) + H2O = glycine betaine + NADH + 2 H(+). Its pathway is amine and polyamine biosynthesis; betaine biosynthesis via choline pathway; betaine aldehyde from choline (cytochrome c reductase route): step 1/1. In terms of biological role, involved in the biosynthesis of the osmoprotectant glycine betaine. Catalyzes the oxidation of choline to betaine aldehyde and betaine aldehyde to glycine betaine at the same rate. The polypeptide is Oxygen-dependent choline dehydrogenase (Pseudomonas aeruginosa (strain LESB58)).